The primary structure comprises 161 residues: Nucleotide-binding protein H16_A3060 (161 aa).

Belongs to the YajQ family.

In terms of biological role, nucleotide-binding protein. The protein is Nucleotide-binding protein H16_A3060 of Cupriavidus necator (strain ATCC 17699 / DSM 428 / KCTC 22496 / NCIMB 10442 / H16 / Stanier 337) (Ralstonia eutropha).